Here is a 176-residue protein sequence, read N- to C-terminus: Large ribosomal subunit protein uL10 (176 aa).

It belongs to the universal ribosomal protein uL10 family. Part of the ribosomal stalk of the 50S ribosomal subunit. The N-terminus interacts with L11 and the large rRNA to form the base of the stalk. The C-terminus forms an elongated spine to which L12 dimers bind in a sequential fashion forming a multimeric L10(L12)X complex.

Forms part of the ribosomal stalk, playing a central role in the interaction of the ribosome with GTP-bound translation factors. This chain is Large ribosomal subunit protein uL10, found in Teredinibacter turnerae (strain ATCC 39867 / T7901).